The sequence spans 117 residues: uncharacterized protein (117 aa).

This is an uncharacterized protein from Mus musculus (Mouse).